The following is a 283-amino-acid chain: Glutamyl-Q tRNA(Asp) synthetase (283 aa).

L-glutamate contacts are provided by residues 5–9 (RFAPT) and Glu-41. A 'HIGH' region motif is present at residues 8 to 18 (PTPSGPLHLGS). Zn(2+) is bound by residues Cys-97, Cys-99, Tyr-111, and Cys-115. L-glutamate-binding residues include Tyr-168 and Arg-186. Positions 224-228 (KLSKQ) match the 'KMSKS' region motif. Lys-227 contributes to the ATP binding site.

The protein belongs to the class-I aminoacyl-tRNA synthetase family. GluQ subfamily. Requires Zn(2+) as cofactor.

Its function is as follows. Catalyzes the tRNA-independent activation of glutamate in presence of ATP and the subsequent transfer of glutamate onto a tRNA(Asp). Glutamate is transferred on the 2-amino-5-(4,5-dihydroxy-2-cyclopenten-1-yl) moiety of the queuosine in the wobble position of the QUC anticodon. This Idiomarina loihiensis (strain ATCC BAA-735 / DSM 15497 / L2-TR) protein is Glutamyl-Q tRNA(Asp) synthetase.